The sequence spans 572 residues: Phosphoglucomutase-1 (572 aa).

Residues T23, R27, 120–121 (SH), and K133 contribute to the substrate site. The active-site Phosphoserine intermediate is S120. A Mg(2+)-binding site is contributed by S120. D288, D290, and D292 together coordinate Mg(2+). Residues 292–293 (DR), T356, 375–377 (EES), K388, and R524 each bind substrate.

Belongs to the phosphohexose mutase family. The cofactor is Mg(2+).

It is found in the cytoplasm. The enzyme catalyses alpha-D-glucose 1-phosphate = alpha-D-glucose 6-phosphate. Functionally, this enzyme participates in both the breakdown and synthesis of glucose. This is Phosphoglucomutase-1 (pgmA) from Dictyostelium discoideum (Social amoeba).